A 511-amino-acid polypeptide reads, in one-letter code: MEEIQRYLQLERSQQHDFLYPLIFQEYIYAFAHDPGFSRSILSENPGYDNKSSLLIVKRLITRMYQQNHFIISPNDSNQNPFWARNKNLYSQIISEGFAFIVEIPFSLRLISCLEGKKKKIVKYQNLRSIHSIFPFLEDNLSHFNFVLDILIPHPVHVEILVQTLRYWVKDASSLHLLRFFLNEYYNWNSLITPKKASSSFSKRNQRLFLFLYNSHVCEYESIFVFLRNQSSHLRSTFSGILFERIYFYGKIERLVNVFVKVKDFQANLWLVKEPCMHYIRYQRKSILASKGTSFFMNKWKCYLVTFWQWHFSLWFHPRRIYINQLSNHSLEFLGYLSSVRMNPSVVRSQILENSFLINNAIKKVDTLVPIIPLIASLAKAKFCNVLGHPISKPVRADLSDSNIIDRFGRIYRNLSHYHSGSSKKKSLYRIKYILRLSCARTLARKHKSTVRTFLKRLGSELLEEFLMSEEDVLFLTFPKASSTLQGVYRSRIWYLDIISINDLANHKSKF.

The protein belongs to the intron maturase 2 family. MatK subfamily.

The protein resides in the plastid. It localises to the chloroplast. Functionally, usually encoded in the trnK tRNA gene intron. Probably assists in splicing its own and other chloroplast group II introns. The sequence is that of Maturase K from Paulownia tomentosa (Princess tree).